Consider the following 409-residue polypeptide: Serine/threonine transporter SstT (409 aa).

The next 9 helical transmembrane spans lie at 14–34, 57–77, 89–109, 149–169, 190–210, 224–244, 296–316, 338–358, and 365–385; these read GNLI…GFIA, GALK…SIII, IIIL…VVSF, AISS…GIAL, IVKF…ATSV, LLLV…AAIV, ISIP…IAVL, IIAA…LMLI, and FGIS…IGVV.

Belongs to the dicarboxylate/amino acid:cation symporter (DAACS) (TC 2.A.23) family.

The protein localises to the cell inner membrane. The enzyme catalyses L-serine(in) + Na(+)(in) = L-serine(out) + Na(+)(out). It catalyses the reaction L-threonine(in) + Na(+)(in) = L-threonine(out) + Na(+)(out). Involved in the import of serine and threonine into the cell, with the concomitant import of sodium (symport system). The chain is Serine/threonine transporter SstT from Campylobacter fetus subsp. fetus (strain 82-40).